The sequence spans 726 residues: Catalase-peroxidase (726 aa).

Positions 98 to 226 (WHSAGTYRMQ…LAAVHMGLIY (129 aa)) form a cross-link, tryptophyl-tyrosyl-methioninium (Trp-Tyr) (with M-252). The active-site Proton acceptor is histidine 99. The tryptophyl-tyrosyl-methioninium (Tyr-Met) (with W-98) cross-link spans 226–252 (YVNPEGVNGQPDPARTAQHVRETFARM). Residue histidine 267 participates in heme b binding.

It belongs to the peroxidase family. Peroxidase/catalase subfamily. As to quaternary structure, homodimer or homotetramer. Heme b is required as a cofactor. In terms of processing, formation of the three residue Trp-Tyr-Met cross-link is important for the catalase, but not the peroxidase activity of the enzyme.

It catalyses the reaction H2O2 + AH2 = A + 2 H2O. It carries out the reaction 2 H2O2 = O2 + 2 H2O. Functionally, bifunctional enzyme with both catalase and broad-spectrum peroxidase activity. The chain is Catalase-peroxidase from Roseobacter denitrificans (strain ATCC 33942 / OCh 114) (Erythrobacter sp. (strain OCh 114)).